We begin with the raw amino-acid sequence, 487 residues long: Beta-barrel assembly-enhancing protease (487 aa).

The signal sequence occupies residues 1 to 27; sequence MFRQLKKNLVATLIAALALGQVAPAFA. H136 contributes to the Zn(2+) binding site. E137 is a catalytic residue. Residues H140 and E201 each coordinate Zn(2+). The Proton donor role is filled by D205. TPR repeat units lie at residues 309–342 and 427–460; these read HAAQ…EPNN and DQEL…AKLG.

Belongs to the peptidase M48 family. BepA subfamily. Requires Zn(2+) as cofactor.

Its subcellular location is the periplasm. Its function is as follows. Functions both as a chaperone and a metalloprotease. Maintains the integrity of the outer membrane by promoting either the assembly or the elimination of outer membrane proteins, depending on their folding state. In Salmonella typhi, this protein is Beta-barrel assembly-enhancing protease.